Here is a 652-residue protein sequence, read N- to C-terminus: Maternal embryonic leucine zipper kinase (652 aa).

The region spanning 13-265 is the Protein kinase domain; the sequence is YELHETIGTG…VKHLLSHPWL (253 aa). Residues 19 to 27 and lysine 42 each bind ATP; that span reads IGTGGFAKV. Catalysis depends on aspartate 134, which acts as the Proton acceptor. Phosphothreonine; by autocatalysis is present on threonine 169. Serine 173 is modified (phosphoserine; by autocatalysis). The interval 284-323 is UBA-like; that stretch reads VDEDCVTELSVFYKCSRTSTSRLISEWNYDHITASYLLLH. Residues 328–652 are autoinhibitory region; it reads HGKPVRLKRP…VEDILSSCKV (325 aa). A phosphothreonine mark is found at threonine 415, threonine 450, threonine 452, threonine 482, and threonine 484. A disordered region spans residues 443-492; the sequence is FLHPAPWTPTPRRKQNEKKGILTTPNKNSHTKEKNQSKETPTKKPITTGE. Basic and acidic residues predominate over residues 472–484; it reads HTKEKNQSKETPT. Phosphoserine is present on residues serine 499, serine 506, and serine 518. Residues 603 to 652 form the KA1 domain; sequence SDFGKVTMQFELEVCQLSKSEMVGIRRQRLKGDAWVYKRLVEDILSSCKV.

The protein belongs to the protein kinase superfamily. CAMK Ser/Thr protein kinase family. SNF1 subfamily. Autophosphorylated: autophosphorylation of the T-loop at Thr-169 and Ser-173 is required for activation. Phosphorylated by the maturation promoting factor (MPF), composed of cdk1 and a cyclin-B. Also phosphorylated by some MAPK. Phosphorylated during oocyte maturation. Dephosphorylation destabilizes the protein. Post-translationally, degraded when cells exit mitosis.

It is found in the cell membrane. The catalysed reaction is L-seryl-[protein] + ATP = O-phospho-L-seryl-[protein] + ADP + H(+). It carries out the reaction L-threonyl-[protein] + ATP = O-phospho-L-threonyl-[protein] + ADP + H(+). Its activity is regulated as follows. Activated by autophosphorylation of the T-loop at Thr-169 and Ser-173: in contrast to other members of the SNF1 subfamily, phosphorylation at Thr-169 is not mediated by STK11/LKB1 but via autophosphorylation instead. Its function is as follows. Serine/threonine-protein kinase involved in various processes such as cell cycle regulation, self-renewal of stem cells, apoptosis and splicing regulation. Also plays a role in primitive hematopoiesis, possibly by affecting the expression of genes critical for hematopoiesis. Plays a role in cytokinesis during early development. The sequence is that of Maternal embryonic leucine zipper kinase (melk) from Xenopus tropicalis (Western clawed frog).